We begin with the raw amino-acid sequence, 331 residues long: XylDLEGF operon transcriptional activator 3 (331 aa).

Residues 214–315 (ERVVQFIEDN…GELPSDTLRR (102 aa)) form the HTH araC/xylS-type domain. DNA-binding regions (H-T-H motif) lie at residues 231-252 (ERLA…EKHA) and 282-305 (VTEM…RSTF).

It is found in the cytoplasm. Its function is as follows. Regulatory protein of the TOL plasmid xyl operons. XylS activates the xylXYZLTEGFJQKIH operon required for the degradation of toluene, m-xylene and p-xylene. This is XylDLEGF operon transcriptional activator 3 (xylS3) from Pseudomonas putida (Arthrobacter siderocapsulatus).